The primary structure comprises 105 residues: UPF0235 protein A1E_05380 (105 aa).

Belongs to the UPF0235 family.

This Rickettsia canadensis (strain McKiel) protein is UPF0235 protein A1E_05380.